A 102-amino-acid polypeptide reads, in one-letter code: Small ribosomal subunit protein uS10 (102 aa).

It belongs to the universal ribosomal protein uS10 family. As to quaternary structure, part of the 30S ribosomal subunit.

In terms of biological role, involved in the binding of tRNA to the ribosomes. This chain is Small ribosomal subunit protein uS10, found in Desulfitobacterium hafniense (strain DSM 10664 / DCB-2).